The chain runs to 315 residues: MSKVKTRVYCCGGTGMDIGVNLQWHPDLVFIDTCDKNVTADHDLERVFLTEGTRGAGKNRRYMLPIIRPQVPGFLERYPAGDFNIVVFGLGGGSGSTIGPVIVSELAKAGESVAVVCMSGIEATEVLQNDIDTLKTLEGIAAATNTPVVINHIENVNGVPYTELDKEAIFNIHALINLTSQKHVRLDKLDIDNWINFTKKHNQIQPQLCQLHISNNRQEATSVPEPIAIASLFADASREVAFGTPFVRTVGISDVSDPDLLADQLHFVINSIGVASLFGSLTKQKQELEAAQVRYQQRNAIIDIDDNRTDDGFVV.

GTP-binding positions include 13 to 14 and 93 to 95; these read GT and GSG.

It belongs to the FtsZ family. PhuZ subfamily. In terms of assembly, homomultimer. Polymerizes in a strictly GTP-dependent manner.

Its subcellular location is the host cytoplasm. It catalyses the reaction GTP + H2O = GDP + phosphate + H(+). The non-hydrolyzable GTP analog GMPCPP stabilizes filaments, which never disassemble. A tubulin-like GTPase that forms filaments, which are required for positioning viral DNA and capsids in the middle of the host cell for optimal replication. The motor component of a partition system which pushes phage DNA (encased by protein gp105) to the center of the bacterial host cell. Also required for movement of phage capsids to the vicinity of the DNA and rotation of the encased viral DNA at midcell. Forms filaments during the lytic phase, which position phage DNA at the center of the bacterial host cell. Filaments have a three-stranded intertwined architecture and form a spindle-like cytoskeleton within the infected cell. Has GTPase activity. Filaments grow at the plus end and depolymerize at the minus end, a process called treadmilling, and switch from growing in a polar manner to catastrophic depolymerization, i.e. they display dynamic instability, like tubulin. In infected host cells the filament ends close to the cell pole are relatively stable, while the other end near the phage DNA is highly dynamic. Both capsid movement and DNA rotation probably require treadmilling. This Pseudomonas aeruginosa (Pseudomonas aeruginosa phage PhiPA3) protein is Phage tubulin-like protein.